We begin with the raw amino-acid sequence, 281 residues long: tRNA uridine(34) hydroxylase (281 aa).

The Rhodanese domain maps to S121–G214. C174 (cysteine persulfide intermediate) is an active-site residue.

The protein belongs to the TrhO family.

It catalyses the reaction uridine(34) in tRNA + AH2 + O2 = 5-hydroxyuridine(34) in tRNA + A + H2O. In terms of biological role, catalyzes oxygen-dependent 5-hydroxyuridine (ho5U) modification at position 34 in tRNAs. The protein is tRNA uridine(34) hydroxylase of Wolbachia pipientis subsp. Culex pipiens (strain wPip).